We begin with the raw amino-acid sequence, 136 residues long: Small ribosomal subunit protein uS9 (136 aa).

The interval 97-136 (SPDNRKPLKTEGHLSRDPRAKERRKYGLKKARKAPQFSKR) is disordered. Basic and acidic residues predominate over residues 98-116 (PDNRKPLKTEGHLSRDPRA). Positions 117 to 136 (KERRKYGLKKARKAPQFSKR) are enriched in basic residues.

This sequence belongs to the universal ribosomal protein uS9 family.

This Prochlorococcus marinus (strain MIT 9301) protein is Small ribosomal subunit protein uS9.